The chain runs to 111 residues: MAMPNLGDMMKQIQQAGEKMQEVQKQLERLVAHGEAGGGMVKATVSGKQKLLSLAIDPEIMDDYEMVQDLVVAAVNSALDASLKLAQDEIGKVTGGMMNPTELLKNLNLGQ.

It belongs to the YbaB/EbfC family. In terms of assembly, homodimer.

It localises to the cytoplasm. The protein resides in the nucleoid. Binds to DNA and alters its conformation. May be involved in regulation of gene expression, nucleoid organization and DNA protection. The protein is Nucleoid-associated protein Cag_1190 of Chlorobium chlorochromatii (strain CaD3).